Reading from the N-terminus, the 273-residue chain is Tryptase-2 (273 aa).

The signal sequence occupies residues 1–18; the sequence is MLHLLALALLLSLVSAAP. A propeptide spans 19-28 (activation peptide); the sequence is APGQALQRSG. Residues 29–270 form the Peptidase S1 domain; it reads IIGGKEAPGS…YLDWIHQYVP (242 aa). Residues Cys57 and Cys73 are joined by a disulfide bond. Residues His72 and Asp119 each act as charge relay system in the active site. Intrachain disulfides connect Cys153–Cys228, Cys186–Cys209, and Cys218–Cys246. The active-site Charge relay system is Ser222. The N-linked (GlcNAc...) asparagine glycan is linked to Asn231.

The protein belongs to the peptidase S1 family. Tryptase subfamily. In terms of assembly, homotetramer.

The protein resides in the secreted. The enzyme catalyses Preferential cleavage: Arg-|-Xaa, Lys-|-Xaa, but with more restricted specificity than trypsin.. Functionally, tryptase is the major neutral protease present in mast cells and is secreted upon the coupled activation-degranulation response of this cell type. The chain is Tryptase-2 from Ovis aries (Sheep).